The chain runs to 310 residues: p-hydroxybenzoic acid efflux pump subunit AaeA (310 aa).

Residues 12–32 (AITVVLVILAFIAIFNAWVYY) form a helical membrane-spanning segment.

Belongs to the membrane fusion protein (MFP) (TC 8.A.1) family.

The protein resides in the cell inner membrane. In terms of biological role, forms an efflux pump with AaeB. The polypeptide is p-hydroxybenzoic acid efflux pump subunit AaeA (Escherichia coli O17:K52:H18 (strain UMN026 / ExPEC)).